A 374-amino-acid chain; its full sequence is Calcium/calmodulin-dependent protein kinase type 1 (374 aa).

The region spanning Y20 to I276 is the Protein kinase domain. Residues L26–V34 and K49 each bind ATP. Residue K59 forms a Glycyl lysine isopeptide (Lys-Gly) (interchain with G-Cter in ubiquitin) linkage. D141 acts as the Proton acceptor in catalysis. T177 carries the phosphothreonine; by CaMKK1 and CaMKK2 modification. The Involved in nuclear import signature appears at K263–R264. The segment at I276–M316 is autoinhibitory domain. A calmodulin-binding region spans residues K296–R317. Residues H315 to L321 carry the Nuclear export signal motif.

This sequence belongs to the protein kinase superfamily. CAMK Ser/Thr protein kinase family. CaMK subfamily. Monomer. Interacts with XPO1. In terms of processing, phosphorylated by CaMKK1 and CaMKK2 on Thr-177. Polybiquitinated by the E3 ubiquitin-protein ligase complex SCF(FBXL12), leading to proteasomal degradation. Widely expressed.

It localises to the cytoplasm. The protein resides in the nucleus. The enzyme catalyses L-seryl-[protein] + ATP = O-phospho-L-seryl-[protein] + ADP + H(+). It catalyses the reaction L-threonyl-[protein] + ATP = O-phospho-L-threonyl-[protein] + ADP + H(+). Its activity is regulated as follows. Activated by Ca(2+)/calmodulin. Binding of calmodulin results in conformational change that relieves intrasteric autoinhibition and allows phosphorylation of Thr-177 within the activation loop by CaMKK1 or CaMKK2. Phosphorylation of Thr-177 results in several fold increase in total activity. Unlike CaMK4, is unable to exhibit autonomous activity after Ca(2+)/calmodulin activation. In terms of biological role, calcium/calmodulin-dependent protein kinase that operates in the calcium-triggered CaMKK-CaMK1 signaling cascade and, upon calcium influx, regulates transcription activators activity, cell cycle, hormone production, cell differentiation, actin filament organization and neurite outgrowth. Recognizes the substrate consensus sequence [MVLIF]-x-R-x(2)-[ST]-x(3)-[MVLIF]. Regulates axonal extension and growth cone motility in hippocampal and cerebellar nerve cells. Upon NMDA receptor-mediated Ca(2+) elevation, promotes dendritic growth in hippocampal neurons and is essential in synapses for full long-term potentiation (LTP) and ERK2-dependent translational activation. Downstream of NMDA receptors, promotes the formation of spines and synapses in hippocampal neurons by phosphorylating ARHGEF7/BETAPIX on 'Ser-516', which results in the enhancement of ARHGEF7 activity and activation of RAC1. Promotes neuronal differentiation and neurite outgrowth by activation and phosphorylation of MARK2 on 'Ser-91', 'Ser-92', 'Ser-93' and 'Ser-294'. Promotes nuclear export of HDAC5 and binding to 14-3-3 by phosphorylation of 'Ser-259' and 'Ser-498' in the regulation of muscle cell differentiation. Regulates NUMB-mediated endocytosis by phosphorylation of NUMB on 'Ser-275' and 'Ser-294'. Involved in the regulation of basal and estrogen-stimulated migration of medulloblastoma cells through ARHGEF7/BETAPIX phosphorylation. Is required for proper activation of cyclin-D1/CDK4 complex during G1 progression in diploid fibroblasts. Plays a role in K(+) and ANG2-mediated regulation of the aldosterone synthase (CYP11B2) to produce aldosterone in the adrenal cortex. Phosphorylates EIF4G3/eIF4GII. In vitro phosphorylates CREB1, ATF1, CFTR, MYL9 and SYN1/synapsin I. This chain is Calcium/calmodulin-dependent protein kinase type 1 (Camk1), found in Rattus norvegicus (Rat).